The primary structure comprises 306 residues: Mitochondrial 2-oxoglutarate/malate carrier protein (306 aa).

Solcar repeat units lie at residues 7–95 (VPNV…LLER), 103–194 (LSFG…AKQA), and 203–292 (DGIF…MNAA). The next 6 helical transmembrane spans lie at 9 to 38 (NVVKFAFGGTAGMGATLVVQPLDLVKNRMQ), 72 to 93 (SAGLLRQATYTTTRLGTYAFLL), 108 to 122 (KAVLGMTAGGIGSFV), 172 to 192 (PTVLRAMVVNAAQLATYSQAK), 205 to 226 (IFCHFLASMISGLATTIASMPV), and 268 to 286 (FTPYYMRLGPHTVLTFIIL).

This sequence belongs to the mitochondrial carrier (TC 2.A.29) family. In terms of assembly, interacts with ant-1.1 and ced-9. Ubiquitously expressed, but highly expressed in the anterior pharynx.

The protein resides in the mitochondrion. It is found in the mitochondrion inner membrane. The enzyme catalyses (S)-malate(in) + 2-oxoglutarate(out) = (S)-malate(out) + 2-oxoglutarate(in). It carries out the reaction malonate(in) + 2-oxoglutarate(out) = malonate(out) + 2-oxoglutarate(in). It catalyses the reaction succinate(in) + 2-oxoglutarate(out) = succinate(out) + 2-oxoglutarate(in). The catalysed reaction is maleate(in) + 2-oxoglutarate(out) = maleate(out) + 2-oxoglutarate(in). The enzyme catalyses oxaloacetate(in) + 2-oxoglutarate(out) = oxaloacetate(out) + 2-oxoglutarate(in). Catalyzes the transport of 2-oxoglutarate (alpha-oxoglutarate) across the inner mitochondrial membrane in an electroneutral exchange for malate. Can also exchange 2-oxoglutarate for other dicarboxylic acids such as malonate, succinate, maleate and oxaloacetate, although with lower affinity. Contributes to several metabolic processes, including the malate-aspartate shuttle, the oxoglutarate/isocitrate shuttle, in gluconeogenesis from lactate, and in nitrogen metabolism. Maintains mitochondrial fusion and fission events, and the organization and morphology of cristae. Regulator of apoptosis, insulin secretion and germline proliferation. Furthermore, plays a role in the oxidative stress response regulating endogenous levels of reactive oxygen species (ROS). Involved in the regulation of lin-35/Rb-mediated apoptosis in the germline. The protein is Mitochondrial 2-oxoglutarate/malate carrier protein of Caenorhabditis elegans.